The following is a 231-amino-acid chain: MTASLDHRFTEFLLESQALKFGEFTLKSGRKSPYFINAGAFNDGRKIARLGAFYAEKIVEEIEAGNLPKDVDTVFGPAYKGIPLGVSTAIALTSAHGMEVGYTFDRKEKKDHGDGGMMVGTQLADGMKVLLVDDVMTAGTAVREVIPKLKAEANVEVIGLVLSVDRMEKTKDSDTSAVKAVEAEFGFPVFAIANVKEIFEAGQRIQNADGTPYVTPEIKAAADAYLEQYGA.

Residues K27, 79–80 (YK), R106, K107, K110, H112, and 133–141 (DDVMTAGTA) contribute to the 5-phospho-alpha-D-ribose 1-diphosphate site. Orotate contacts are provided by T137 and R166.

It belongs to the purine/pyrimidine phosphoribosyltransferase family. PyrE subfamily. As to quaternary structure, homodimer. It depends on Mg(2+) as a cofactor.

It catalyses the reaction orotidine 5'-phosphate + diphosphate = orotate + 5-phospho-alpha-D-ribose 1-diphosphate. It participates in pyrimidine metabolism; UMP biosynthesis via de novo pathway; UMP from orotate: step 1/2. In terms of biological role, catalyzes the transfer of a ribosyl phosphate group from 5-phosphoribose 1-diphosphate to orotate, leading to the formation of orotidine monophosphate (OMP). This is Orotate phosphoribosyltransferase from Bifidobacterium adolescentis (strain ATCC 15703 / DSM 20083 / NCTC 11814 / E194a).